The primary structure comprises 235 residues: Octanoyltransferase (235 aa).

Positions 30 to 214 constitute a BPL/LPL catalytic domain; sequence NELEDTLLLL…YFGKVFGAKF (185 aa). Substrate-binding positions include 75-82, 144-146, and 157-159; these read RGGDVTYH, AIG, and GFA. The active-site Acyl-thioester intermediate is the cysteine 175.

The protein belongs to the LipB family.

The protein resides in the cytoplasm. It catalyses the reaction octanoyl-[ACP] + L-lysyl-[protein] = N(6)-octanoyl-L-lysyl-[protein] + holo-[ACP] + H(+). Its pathway is protein modification; protein lipoylation via endogenous pathway; protein N(6)-(lipoyl)lysine from octanoyl-[acyl-carrier-protein]: step 1/2. In terms of biological role, catalyzes the transfer of endogenously produced octanoic acid from octanoyl-acyl-carrier-protein onto the lipoyl domains of lipoate-dependent enzymes. Lipoyl-ACP can also act as a substrate although octanoyl-ACP is likely to be the physiological substrate. The protein is Octanoyltransferase of Caldicellulosiruptor saccharolyticus (strain ATCC 43494 / DSM 8903 / Tp8T 6331).